Reading from the N-terminus, the 245-residue chain is 1-(5-phosphoribosyl)-5-[(5-phosphoribosylamino)methylideneamino] imidazole-4-carboxamide isomerase (245 aa).

The Proton acceptor role is filled by Asp-7. Asp-129 acts as the Proton donor in catalysis.

Belongs to the HisA/HisF family.

The protein resides in the cytoplasm. The enzyme catalyses 1-(5-phospho-beta-D-ribosyl)-5-[(5-phospho-beta-D-ribosylamino)methylideneamino]imidazole-4-carboxamide = 5-[(5-phospho-1-deoxy-D-ribulos-1-ylimino)methylamino]-1-(5-phospho-beta-D-ribosyl)imidazole-4-carboxamide. It participates in amino-acid biosynthesis; L-histidine biosynthesis; L-histidine from 5-phospho-alpha-D-ribose 1-diphosphate: step 4/9. The polypeptide is 1-(5-phosphoribosyl)-5-[(5-phosphoribosylamino)methylideneamino] imidazole-4-carboxamide isomerase (Shewanella baltica (strain OS195)).